A 141-amino-acid chain; its full sequence is uncharacterized protein (141 aa).

A helical membrane pass occupies residues 114 to 134 (ILFTCYIQSFSLLISNFFIAI).

Its subcellular location is the membrane. This is an uncharacterized protein from Schizosaccharomyces pombe (strain 972 / ATCC 24843) (Fission yeast).